The sequence spans 93 residues: Putative pterin-4-alpha-carbinolamine dehydratase (93 aa).

This sequence belongs to the pterin-4-alpha-carbinolamine dehydratase family.

It carries out the reaction (4aS,6R)-4a-hydroxy-L-erythro-5,6,7,8-tetrahydrobiopterin = (6R)-L-erythro-6,7-dihydrobiopterin + H2O. In Thermomicrobium roseum (strain ATCC 27502 / DSM 5159 / P-2), this protein is Putative pterin-4-alpha-carbinolamine dehydratase.